Consider the following 122-residue polypeptide: Small ribosomal subunit protein uS13 (122 aa).

The interval 99–122 (RGQRTHTNARTRKGPAKAIAGKKK) is disordered.

This sequence belongs to the universal ribosomal protein uS13 family. Part of the 30S ribosomal subunit. Forms a loose heterodimer with protein S19. Forms two bridges to the 50S subunit in the 70S ribosome.

Its function is as follows. Located at the top of the head of the 30S subunit, it contacts several helices of the 16S rRNA. In the 70S ribosome it contacts the 23S rRNA (bridge B1a) and protein L5 of the 50S subunit (bridge B1b), connecting the 2 subunits; these bridges are implicated in subunit movement. Contacts the tRNAs in the A and P-sites. This chain is Small ribosomal subunit protein uS13, found in Rhodopseudomonas palustris (strain HaA2).